A 146-amino-acid chain; its full sequence is Aminoglycoside N(6')-acetyltransferase type 1 (146 aa).

The N-acetyltransferase domain maps to 1–146 (MNIMPISESQ…RVVYFKKNIG (146 aa)). Substrate-binding residues include Trp22, His25, Tyr66, and Glu79. Position 81–83 (81–83 (IFV)) interacts with acetyl-CoA. Asp115 contributes to the substrate binding site. Asn120 contacts acetyl-CoA. Residue Glu136 participates in substrate binding.

In terms of assembly, homodimer.

It catalyses the reaction kanamycin B + acetyl-CoA = N(6')-acetylkanamycin B + CoA + H(+). In terms of biological role, catalyzes the transfer of an acetyl group from acetyl-CoA to the 6'-amino group of aminoglycoside molecules conferring resistance to antibiotics containing the purpurosamine ring including amikacin, kanamycin, tobramycin and netilmicin. The chain is Aminoglycoside N(6')-acetyltransferase type 1 from Acinetobacter baumannii.